The following is a 146-amino-acid chain: Hut operon positive regulatory protein (146 aa).

It belongs to the HutP family. As to quaternary structure, homohexamer.

In terms of biological role, antiterminator that binds to cis-acting regulatory sequences on the mRNA in the presence of histidine, thereby suppressing transcription termination and activating the hut operon for histidine utilization. This chain is Hut operon positive regulatory protein, found in Bacillus cereus (strain G9842).